We begin with the raw amino-acid sequence, 203 residues long: MQNINEIEELIKLISKLPGLGPKSAKRIVLKLINNRDELVKPMANTLAQVYKNVIRCQSCGTLKSNSLGCNNCENSKEKYNKICVVEDIADQWSIENSNIYKGYFHILGGTISSAGQRKEDLLINSLVERVSRENIEEVILATSATVEGQTTAYYIEDSLKKTSTKVTKLAQGLPVGGEIESLDDGTLYSAFKNRTGIKTNSD.

A C4-type zinc finger spans residues 57–73 (CQSCGTLKSNSLGCNNC). Residues 81-175 (NKICVVEDIA…KVTKLAQGLP (95 aa)) enclose the Toprim domain.

Belongs to the RecR family.

Functionally, may play a role in DNA repair. It seems to be involved in an RecBC-independent recombinational process of DNA repair. It may act with RecF and RecO. The chain is Recombination protein RecR from Pelagibacter ubique (strain HTCC1062).